We begin with the raw amino-acid sequence, 887 residues long: 3-hydroxy-3-methylglutaryl-coenzyme A reductase (887 aa).

Topologically, residues 1-9 (MLSRLFRMH) are cytoplasmic. Residues 10–39 (GLFVASHPWEVIVGTVTLTICMMSMNMFTG) form a helical membrane-spanning segment. The Lumenal segment spans residues 40-56 (NNKICGWNYECPKFEED). The helical transmembrane segment at 57 to 78 (VLSSDIIILTITRCIAILYIYF) threads the bilayer. The SSD domain maps to 61 to 218 (DIIILTITRC…MTFFPACVSL (158 aa)). Positions 75 to 78 (YIYF) match the INSIG-binding motif motif. Over 79–89 (QFQNLRQLGSK) the chain is Cytoplasmic. A Glycyl lysine isopeptide (Lys-Gly) (interchain with G-Cter in ubiquitin) cross-link involves residue Lys-89. Residues 90 to 114 (YILGIAGLFTIFSSFVFSTVVIHFL) form a helical membrane-spanning segment. Topologically, residues 115–123 (DKELTGLNE) are lumenal. Residues 124–149 (ALPFFLLLIDLSRASALAKFALSSNS) traverse the membrane as a helical segment. The Cytoplasmic segment spans residues 150–159 (QDEVRENIAR). Residues 160–187 (GMAILGPTFTLDALVECLVIGVGTMSGV) form a helical membrane-spanning segment. The Lumenal portion of the chain corresponds to 188–191 (RQLE). Residues 192-220 (IMCCFGCMSVLANYFVFMTFFPACVSLVL) form a helical membrane-spanning segment. Over 221–248 (ELSRESREGRPIWQLSHFARVLEEEENK) the chain is Cytoplasmic. Lys-248 participates in a covalent cross-link: Glycyl lysine isopeptide (Lys-Gly) (interchain with G-Cter in ubiquitin). A helical transmembrane segment spans residues 249–275 (PNPVTQRVKMIMSLGLVLVHAHSRWIA). Residues 276–314 (DPSPQNSTAEQSKVSLGLAEDVSKRIEPSVSLWQFYLSK) lie on the Lumenal side of the membrane. The N-linked (GlcNAc...) asparagine glycan is linked to Asn-281. A helical transmembrane segment spans residues 315–339 (MISMDIEQVITLSLALLLAVKYIFF). Over 340–887 (EQAETESTLS…LQGTCTKKAA (548 aa)) the chain is Cytoplasmic. Catalysis depends on charge relay system residues Glu-558, Lys-690, and Asp-766. The Proton donor role is filled by His-865. Ser-871 bears the Phosphoserine; by AMPK mark.

This sequence belongs to the HMG-CoA reductase family. Homotetramer. Homodimer. Interacts (via its SSD) with INSIG1; the interaction, accelerated by sterols, leads to the recruitment of HMGCR to AMFR/gp78 for its ubiquitination by the sterol-mediated ERAD pathway. Interacts with UBIAD1. Undergoes sterol-mediated ubiquitination and ER-associated degradation (ERAD). Accumulation of sterols in the endoplasmic reticulum (ER) membrane, triggers binding of the reductase to the ER membrane protein INSIG1 or INSIG2. The INSIG1 binding leads to the recruitment of the ubiquitin ligase, AMFR/gp78, RNF139 or RNF145, initiating ubiquitination of the reductase. The ubiquitinated reductase is then extracted from the ER membrane and delivered to cytosolic 26S proteosomes by a mechanism probably mediated by the ATPase Valosin-containing protein VCP/p97. The INSIG2-binding leads to the recruitment of the ubiquitin ligase RNF139, initiating ubiquitination of the reductase. Lys-248 is the main site of ubiquitination. Ubiquitination is enhanced by the presence of a geranylgeranylated protein. In terms of processing, N-glycosylated. Deglycosylated by NGLY1 on release from the endoplasmic reticulum (ER) in a sterol-mediated manner. Post-translationally, phosphorylated. Phosphorylation at Ser-871 reduces the catalytic activity.

Its subcellular location is the endoplasmic reticulum membrane. It is found in the peroxisome membrane. It carries out the reaction (R)-mevalonate + 2 NADP(+) + CoA = (3S)-3-hydroxy-3-methylglutaryl-CoA + 2 NADPH + 2 H(+). Its pathway is metabolic intermediate biosynthesis; (R)-mevalonate biosynthesis; (R)-mevalonate from acetyl-CoA: step 3/3. With respect to regulation, regulated by a negative feedback mechanism through sterols and non-sterol metabolites derived from mevalonate. Phosphorylation at Ser-871 down-regulates the catalytic activity. Functionally, catalyzes the conversion of (3S)-hydroxy-3-methylglutaryl-CoA (HMG-CoA) to mevalonic acid, the rate-limiting step in the synthesis of cholesterol and other isoprenoids, thus plays a critical role in cellular cholesterol homeostasis. This Rattus norvegicus (Rat) protein is 3-hydroxy-3-methylglutaryl-coenzyme A reductase (Hmgcr).